Consider the following 461-residue polypeptide: Cysteine--tRNA ligase (461 aa).

Cys29 is a binding site for Zn(2+). The 'HIGH' region signature appears at 31 to 41 (MTVYDFCHIGH). The Zn(2+) site is built by Cys210, His235, and Glu239. The short motif at 267 to 271 (KMSKS) is the 'KMSKS' region element. Lys270 is a binding site for ATP.

It belongs to the class-I aminoacyl-tRNA synthetase family. Monomer. Zn(2+) serves as cofactor.

The protein resides in the cytoplasm. The enzyme catalyses tRNA(Cys) + L-cysteine + ATP = L-cysteinyl-tRNA(Cys) + AMP + diphosphate. The chain is Cysteine--tRNA ligase from Ectopseudomonas mendocina (strain ymp) (Pseudomonas mendocina).